A 346-amino-acid chain; its full sequence is Nicotinate-nucleotide--dimethylbenzimidazole phosphoribosyltransferase (346 aa).

E312 functions as the Proton acceptor in the catalytic mechanism.

This sequence belongs to the CobT family.

The enzyme catalyses 5,6-dimethylbenzimidazole + nicotinate beta-D-ribonucleotide = alpha-ribazole 5'-phosphate + nicotinate + H(+). The protein operates within nucleoside biosynthesis; alpha-ribazole biosynthesis; alpha-ribazole from 5,6-dimethylbenzimidazole: step 1/2. Functionally, catalyzes the synthesis of alpha-ribazole-5'-phosphate from nicotinate mononucleotide (NAMN) and 5,6-dimethylbenzimidazole (DMB). This is Nicotinate-nucleotide--dimethylbenzimidazole phosphoribosyltransferase from Cupriavidus necator (strain ATCC 17699 / DSM 428 / KCTC 22496 / NCIMB 10442 / H16 / Stanier 337) (Ralstonia eutropha).